Consider the following 507-residue polypeptide: uncharacterized protein (507 aa).

A compositionally biased stretch (low complexity) spans 1-12 (MEKSISSISKAS). Residues 1 to 20 (MEKSISSISKASMNSDEKLD) are disordered. A run of 12 helical transmembrane segments spans residues 57–74 (FDFRILPLLALLYLFNAL), 100–120 (IMISIFYIPFVLCAFPFSYLY), 126–146 (ARILPFFMLSFGAMSLCQAAV), 157–177 (WFLGMAESAVLPGVVYYLTTF), 189–209 (IFYAAANVSSAFGGLLAYGVF), 221–241 (YLFLIEGGVTFLCAIVIFLVL), 283–303 (VFKHPIAILWLLEEMALGVPL), 326–346 (LMTVAPAISGAIWLLVFAFIS), 353–373 (GIVLIAAISTTMIGFIVYGSI), 379–399 (IGVSYFACFLMTAGAAASSVL), 416–436 (VFTSVGVPLANVMGLVSANIF), and 445–465 (VPALGITAGFGGLGILLVASI).

Belongs to the major facilitator superfamily. Allantoate permease family.

Its subcellular location is the endoplasmic reticulum. The protein localises to the membrane. This is an uncharacterized protein from Schizosaccharomyces pombe (strain 972 / ATCC 24843) (Fission yeast).